A 311-amino-acid chain; its full sequence is 4-diphosphocytidyl-2-C-methyl-D-erythritol kinase (311 aa).

Residue lysine 9 is part of the active site. ATP is bound at residue 95-105 (PLGAGLAGGST). The active site involves aspartate 137.

Belongs to the GHMP kinase family. IspE subfamily.

The enzyme catalyses 4-CDP-2-C-methyl-D-erythritol + ATP = 4-CDP-2-C-methyl-D-erythritol 2-phosphate + ADP + H(+). It participates in isoprenoid biosynthesis; isopentenyl diphosphate biosynthesis via DXP pathway; isopentenyl diphosphate from 1-deoxy-D-xylulose 5-phosphate: step 3/6. Catalyzes the phosphorylation of the position 2 hydroxy group of 4-diphosphocytidyl-2C-methyl-D-erythritol. This is 4-diphosphocytidyl-2-C-methyl-D-erythritol kinase from Thermosynechococcus vestitus (strain NIES-2133 / IAM M-273 / BP-1).